The sequence spans 455 residues: Chromosomal replication initiator protein DnaA (455 aa).

A domain I, interacts with DnaA modulators region spans residues 1–75 (MDTNNNIEKE…EILSQNKVGM (75 aa)). The domain II stretch occupies residues 75–106 (MHLAHSVDVRIEVAPKIQISAQPNINYKAVKT). The tract at residues 107–321 (SVKDSYTFEN…GAIIKISVNA (215 aa)) is domain III, AAA+ region. ATP contacts are provided by Gly151, Gly153, Lys154, and Thr155. A domain IV, binds dsDNA region spans residues 322–455 (NLMNAPIDLN…DKKTAFHSSE (134 aa)).

This sequence belongs to the DnaA family. In terms of assembly, oligomerizes as a right-handed, spiral filament on DNA at oriC.

The protein resides in the cytoplasm. Its function is as follows. Plays an essential role in the initiation and regulation of chromosomal replication. ATP-DnaA binds to the origin of replication (oriC) to initiate formation of the DNA replication initiation complex once per cell cycle. Binds the DnaA box (a 9 base pair repeat at the origin) and separates the double-stranded (ds)DNA. Forms a right-handed helical filament on oriC DNA; dsDNA binds to the exterior of the filament while single-stranded (ss)DNA is stabiized in the filament's interior. The ATP-DnaA-oriC complex binds and stabilizes one strand of the AT-rich DNA unwinding element (DUE), permitting loading of DNA polymerase. After initiation quickly degrades to an ADP-DnaA complex that is not apt for DNA replication. Binds acidic phospholipids. In Helicobacter pylori (strain Shi470), this protein is Chromosomal replication initiator protein DnaA.